We begin with the raw amino-acid sequence, 377 residues long: Carbamoyl phosphate synthase small chain (377 aa).

The tract at residues 1–186 (MNTPALLVLA…LGKGFVTPDK (186 aa)) is CPSase. L-glutamine contacts are provided by serine 47, glycine 238, and glycine 240. The Glutamine amidotransferase type-1 domain maps to 190–377 (HVVAYDFGVK…IGNMKAAKQA (188 aa)). Residue cysteine 266 is the Nucleophile of the active site. 5 residues coordinate L-glutamine: leucine 267, glutamine 270, asparagine 308, glycine 310, and phenylalanine 311. Active-site residues include histidine 350 and glutamate 352.

It belongs to the CarA family. In terms of assembly, composed of two chains; the small (or glutamine) chain promotes the hydrolysis of glutamine to ammonia, which is used by the large (or ammonia) chain to synthesize carbamoyl phosphate. Tetramer of heterodimers (alpha,beta)4.

It catalyses the reaction hydrogencarbonate + L-glutamine + 2 ATP + H2O = carbamoyl phosphate + L-glutamate + 2 ADP + phosphate + 2 H(+). The catalysed reaction is L-glutamine + H2O = L-glutamate + NH4(+). Its pathway is amino-acid biosynthesis; L-arginine biosynthesis; carbamoyl phosphate from bicarbonate: step 1/1. It participates in pyrimidine metabolism; UMP biosynthesis via de novo pathway; (S)-dihydroorotate from bicarbonate: step 1/3. Small subunit of the glutamine-dependent carbamoyl phosphate synthetase (CPSase). CPSase catalyzes the formation of carbamoyl phosphate from the ammonia moiety of glutamine, carbonate, and phosphate donated by ATP, constituting the first step of 2 biosynthetic pathways, one leading to arginine and/or urea and the other to pyrimidine nucleotides. The small subunit (glutamine amidotransferase) binds and cleaves glutamine to supply the large subunit with the substrate ammonia. This is Carbamoyl phosphate synthase small chain from Neisseria gonorrhoeae.